Reading from the N-terminus, the 428-residue chain is Aspartic protease 10 (428 aa).

The first 16 residues, 1 to 16 (MKTFIALLALLTVVSA), serve as a signal peptide directing secretion. Positions 72–425 (YMVQISLGSP…DMKSGRLGLA (354 aa)) constitute a Peptidase A1 domain. The active site involves D90. Residues N155 and N191 are each glycosylated (N-linked (GlcNAc...) asparagine). Residue D318 is part of the active site. C353 and C385 are joined by a disulfide.

It belongs to the peptidase A1 family. Post-translationally, proteolytically cleaved. In terms of tissue distribution, synthesized in the intestine. When secreted in low heme conditions, localizes to neurons near the anterior and posterior regions of the body and in coelomocytes.

It localises to the secreted. Aspartic protease which plays a role in heme homeostasis and mediates inter-organ signaling between the intestine and extra-intestinal tissues when cellular heme levels are low. The polypeptide is Aspartic protease 10 (Caenorhabditis elegans).